The following is a 154-amino-acid chain: Interleukin-2 (154 aa).

The N-terminal stretch at 1 to 20 is a signal peptide; sequence MYRMQLLSCIALSLALVTNS. Thr-23 carries O-linked (GalNAc...) threonine glycosylation. The cysteines at positions 78 and 126 are disulfide-linked.

The protein belongs to the IL-2 family.

The protein resides in the secreted. In terms of biological role, cytokine produced by activated CD4-positive helper T-cells and to a lesser extend activated CD8-positive T-cells and natural killer (NK) cells that plays pivotal roles in the immune response and tolerance. Binds to a receptor complex composed of either the high-affinity trimeric IL-2R (IL2RA/CD25, IL2RB/CD122 and IL2RG/CD132) or the low-affinity dimeric IL-2R (IL2RB and IL2RG). Interaction with the receptor leads to oligomerization and conformation changes in the IL-2R subunits resulting in downstream signaling starting with phosphorylation of JAK1 and JAK3. In turn, JAK1 and JAK3 phosphorylate the receptor to form a docking site leading to the phosphorylation of several substrates including STAT5. This process leads to activation of several pathways including STAT, phosphoinositide-3-kinase/PI3K and mitogen-activated protein kinase/MAPK pathways. Functions as a T-cell growth factor and can increase NK-cell cytolytic activity as well. Promotes strong proliferation of activated B-cells and subsequently immunoglobulin production. Plays a pivotal role in regulating the adaptive immune system by controlling the survival and proliferation of regulatory T-cells, which are required for the maintenance of immune tolerance. Moreover, participates in the differentiation and homeostasis of effector T-cell subsets, including Th1, Th2, Th17 as well as memory CD8-positive T-cells. The sequence is that of Interleukin-2 (IL2) from Macaca mulatta (Rhesus macaque).